The chain runs to 56 residues: Large ribosomal subunit protein bL32 (56 aa).

The tract at residues 1 to 37 (MAVQQNKKSRSRRDMRRSHDALTTAAVSVDKASGETH) is disordered. A compositionally biased stretch (basic residues) spans 7–16 (KKSRSRRDMR).

Belongs to the bacterial ribosomal protein bL32 family.

This is Large ribosomal subunit protein bL32 from Haemophilus influenzae (strain PittEE).